The sequence spans 257 residues: UPF0246 protein Shewmr4_2963 (257 aa).

This sequence belongs to the UPF0246 family.

The protein is UPF0246 protein Shewmr4_2963 of Shewanella sp. (strain MR-4).